A 675-amino-acid chain; its full sequence is E3 ubiquitin-protein ligase COP1 (675 aa).

Residues 1-40 are disordered; sequence MEEISTDPVVPAVKPDPRTSSVGEGANRHENDDGGSGGSE. 8 residues coordinate Zn(2+): cysteine 52, cysteine 55, cysteine 67, histidine 69, cysteine 72, cysteine 75, cysteine 86, and cysteine 89. The segment at 52–90 adopts an RING-type zinc-finger fold; the sequence is CPICMQIIKDAFLTACGHSFCYMCIITHLRNKSDCPCCS. Residues 67–177 form a CLS (cytoplasmic localization signal) region; sequence CGHSFCYMCI…LDFLHCLRKQ (111 aa). Residues 120-177 are SNLS (subnuclear localization signal); the sequence is ASPLDQFREALQRGCDVSIKEVDNLLTLLAERKRKMEQEEAERNMQILLDFLHCLRKQ. The stretch at 134–201 forms a coiled coil; it reads CDVSIKEVDN…IKEDINAVER (68 aa). A disordered region spans residues 261–290; that stretch reads EGKAQGSSHGLPKKDALSGSDSQSLNQSTV. Positions 279–290 are enriched in polar residues; sequence GSDSQSLNQSTV. Positions 294-317 match the Bipartite nuclear localization signal motif; that stretch reads RKKRIHAQFNDLQECYLQKRRQLA. 7 WD repeats span residues 369 to 408, 418 to 458, 461 to 501, 503 to 543, 547 to 585, 588 to 627, and 642 to 675; these read HSAN…NEPA, STRS…SLME, EHEK…SVIN, DMKA…QPLH, GHKK…PVRT, GHTN…PVTS, and AGSY…VLAA. Residues 593-595 form a binding of human TRIB1 COP1-binding-motif region; sequence KNF.

As to quaternary structure, homodimer. Interacts with HY5, HYH, BBX24/STO, BBX25/STH, CIP8, COP10, SPA1, SPA2, SPA3, SPA4 and UVR8 and phosphorylated PHYA. Light induces dissociation of the SPA1/COP1 complex. Interacts with HRT/RPP8 and triggers it to the 26s proteasome. Binds to CRY2; this competitive interaction prevents triggering to proteasome of other binding proteins. Binds to SHW1 in the nucleus. Bonds to CIP7. Interacts with CSU2. Binds to CIP1. Interacts directly with DHU1. Associates to UNE10/PIF8. Binds directly to PCH1 and PCHL. Autoubiquitinated.

Its subcellular location is the nucleus. It localises to the cytoplasm. The catalysed reaction is S-ubiquitinyl-[E2 ubiquitin-conjugating enzyme]-L-cysteine + [acceptor protein]-L-lysine = [E2 ubiquitin-conjugating enzyme]-L-cysteine + N(6)-ubiquitinyl-[acceptor protein]-L-lysine.. Its pathway is protein modification; protein ubiquitination. Functionally, E3 ubiquitin-protein ligase that acts as a repressor of photomorphogenesis and as an activator of etiolation in darkness. E3 ubiquitin ligases accept ubiquitin from an E2 ubiquitin-conjugating enzyme in the form of a thioester and then directly transfers the ubiquitin to targeted substrates. Represses photomorphogenesis in darkness by mediating ubiquitination and subsequent proteasomal degradation of light-induced transcription factors such as HY5, HYH and LAF1. Down-regulates MYB21, probably via ubiquitination process. Light stimuli abrogate the repression of photomorphogenesis, possibly due to its localization to the cytoplasm. Could play a role in switching between skotomorphogenetic and photomorphogenetic pathways. Mediates the ubiquitination-dependent degradation of HY5 in the darkness during seedling development (e.g. hypocotyl growth). Represses CIP7 in darkness. Triggers ubiquitination and subsequent protein degradation of UNE10/PIF8, PCH1 and PCHL in the dark. This chain is E3 ubiquitin-protein ligase COP1, found in Arabidopsis thaliana (Mouse-ear cress).